Consider the following 245-residue polypeptide: Ribonuclease PH (245 aa).

Residues R93 and G131 to R133 each bind phosphate.

It belongs to the RNase PH family. Homohexameric ring arranged as a trimer of dimers.

The catalysed reaction is tRNA(n+1) + phosphate = tRNA(n) + a ribonucleoside 5'-diphosphate. In terms of biological role, phosphorolytic 3'-5' exoribonuclease that plays an important role in tRNA 3'-end maturation. Removes nucleotide residues following the 3'-CCA terminus of tRNAs; can also add nucleotides to the ends of RNA molecules by using nucleoside diphosphates as substrates, but this may not be physiologically important. Probably plays a role in initiation of 16S rRNA degradation (leading to ribosome degradation) during starvation. The chain is Ribonuclease PH from Corynebacterium efficiens (strain DSM 44549 / YS-314 / AJ 12310 / JCM 11189 / NBRC 100395).